We begin with the raw amino-acid sequence, 504 residues long: Histidine ammonia-lyase (504 aa).

Positions 141 to 143 (ASG) form a cross-link, 5-imidazolinone (Ala-Gly). S142 is modified (2,3-didehydroalanine (Ser)).

It belongs to the PAL/histidase family. Post-translationally, contains an active site 4-methylidene-imidazol-5-one (MIO), which is formed autocatalytically by cyclization and dehydration of residues Ala-Ser-Gly.

It is found in the cytoplasm. The catalysed reaction is L-histidine = trans-urocanate + NH4(+). It participates in amino-acid degradation; L-histidine degradation into L-glutamate; N-formimidoyl-L-glutamate from L-histidine: step 1/3. The chain is Histidine ammonia-lyase from Geobacillus thermodenitrificans (strain NG80-2).